We begin with the raw amino-acid sequence, 512 residues long: Cytochrome P450 1A1 (512 aa).

The interval 29-40 is mitochondrial targeting signal; the sequence is SRPQVPKGLKNP. A glycan (O-linked (GlcNAc) serine) is linked at Ser-67. Phe-224 is a substrate binding site. Cys-457 provides a ligand contact to heme.

This sequence belongs to the cytochrome P450 family. In terms of assembly, interacts with cytosolic chaperones HSP70 and HSP90; this interaction is required for initial targeting to mitochondria. Interacts (via mitochondrial targeting signal) with TOMM40 (via N-terminus); this interaction is required for translocation across the mitochondrial outer membrane. Requires heme as cofactor. Lung, lymphocytes and placenta.

Its subcellular location is the endoplasmic reticulum membrane. It localises to the mitochondrion inner membrane. The protein resides in the microsome membrane. The protein localises to the cytoplasm. The catalysed reaction is an organic molecule + reduced [NADPH--hemoprotein reductase] + O2 = an alcohol + oxidized [NADPH--hemoprotein reductase] + H2O + H(+). It carries out the reaction estrone + reduced [NADPH--hemoprotein reductase] + O2 = 2-hydroxyestrone + oxidized [NADPH--hemoprotein reductase] + H2O + H(+). The enzyme catalyses estrone + reduced [NADPH--hemoprotein reductase] + O2 = 4-hydroxyestrone + oxidized [NADPH--hemoprotein reductase] + H2O + H(+). It catalyses the reaction estrone + reduced [NADPH--hemoprotein reductase] + O2 = 6alpha-hydroxyestrone + oxidized [NADPH--hemoprotein reductase] + H2O + H(+). The catalysed reaction is estrone + reduced [NADPH--hemoprotein reductase] + O2 = 15alpha-hydroxyestrone + oxidized [NADPH--hemoprotein reductase] + H2O + H(+). It carries out the reaction estrone + reduced [NADPH--hemoprotein reductase] + O2 = 16alpha-hydroxyestrone + oxidized [NADPH--hemoprotein reductase] + H2O + H(+). The enzyme catalyses 17beta-estradiol + reduced [NADPH--hemoprotein reductase] + O2 = 2-hydroxy-17beta-estradiol + oxidized [NADPH--hemoprotein reductase] + H2O + H(+). It catalyses the reaction 17beta-estradiol + reduced [NADPH--hemoprotein reductase] + O2 = 4-hydroxy-17beta-estradiol + oxidized [NADPH--hemoprotein reductase] + H2O + H(+). The catalysed reaction is 17beta-estradiol + reduced [NADPH--hemoprotein reductase] + O2 = 6alpha-hydroxy-17beta-estradiol + oxidized [NADPH--hemoprotein reductase] + H2O + H(+). It carries out the reaction 17beta-estradiol + reduced [NADPH--hemoprotein reductase] + O2 = 7alpha-hydroxy-17beta-estradiol + oxidized [NADPH--hemoprotein reductase] + H2O + H(+). The enzyme catalyses 17beta-estradiol + reduced [NADPH--hemoprotein reductase] + O2 = 15alpha-hydroxy-17beta-estradiol + oxidized [NADPH--hemoprotein reductase] + H2O + H(+). It catalyses the reaction (5Z,8Z,11Z)-eicosatrienoate + reduced [NADPH--hemoprotein reductase] + O2 = 19-hydroxy-(5Z,8Z,11Z)-eicosatrienoate + oxidized [NADPH--hemoprotein reductase] + H2O + H(+). The catalysed reaction is (5Z,8Z,11Z,14Z)-eicosatetraenoate + reduced [NADPH--hemoprotein reductase] + O2 = 16-hydroxy-(5Z,8Z,11Z,14Z)-eicosatetraenoate + oxidized [NADPH--hemoprotein reductase] + H2O + H(+). It carries out the reaction (5Z,8Z,11Z,14Z)-eicosatetraenoate + reduced [NADPH--hemoprotein reductase] + O2 = 17-hydroxy-(5Z,8Z,11Z,14Z)-eicosatetraenoate + oxidized [NADPH--hemoprotein reductase] + H2O + H(+). The enzyme catalyses (5Z,8Z,11Z,14Z)-eicosatetraenoate + reduced [NADPH--hemoprotein reductase] + O2 = 18-hydroxy-(5Z,8Z,11Z,14Z)-eicosatetraenoate + oxidized [NADPH--hemoprotein reductase] + H2O + H(+). It catalyses the reaction (5Z,8Z,11Z,14Z)-eicosatetraenoate + reduced [NADPH--hemoprotein reductase] + O2 = 19-hydroxy-(5Z,8Z,11Z,14Z)-eicosatetraenoate + oxidized [NADPH--hemoprotein reductase] + H2O + H(+). The catalysed reaction is (5Z,8Z,11Z,14Z,17Z)-eicosapentaenoate + reduced [NADPH--hemoprotein reductase] + O2 = 19-hydroxy-(5Z,8Z,11Z,14Z,17Z)-eicosapentaenoate + oxidized [NADPH--hemoprotein reductase] + H2O + H(+). It carries out the reaction (5Z,8Z,11Z,14Z)-eicosatetraenoate + reduced [NADPH--hemoprotein reductase] + O2 = (8R,9S)-epoxy-(5Z,11Z,14Z)-eicosatrienoate + oxidized [NADPH--hemoprotein reductase] + H2O + H(+). The enzyme catalyses (5Z,8Z,11Z,14Z)-eicosatetraenoate + reduced [NADPH--hemoprotein reductase] + O2 = (11R,12S)-epoxy-(5Z,8Z,14Z)-eicosatrienoate + oxidized [NADPH--hemoprotein reductase] + H2O + H(+). It catalyses the reaction (5Z,8Z,11Z,14Z)-eicosatetraenoate + reduced [NADPH--hemoprotein reductase] + O2 = (14S,15R)-epoxy-(5Z,8Z,11Z)-eicosatrienoate + oxidized [NADPH--hemoprotein reductase] + H2O + H(+). The catalysed reaction is (5Z,8Z,11Z,14Z)-eicosatetraenoate + reduced [NADPH--hemoprotein reductase] + O2 = (14R,15S)-epoxy-(5Z,8Z,11Z)-eicosatrienoate + oxidized [NADPH--hemoprotein reductase] + H2O + H(+). It carries out the reaction (5Z,8Z,11Z,14Z,17Z)-eicosapentaenoate + reduced [NADPH--hemoprotein reductase] + O2 = (17R,18S)-epoxy-(5Z,8Z,11Z,14Z)-eicosatetraenoate + oxidized [NADPH--hemoprotein reductase] + H2O + H(+). The enzyme catalyses (4Z,7Z,10Z,13Z,16Z,19Z)-docosahexaenoate + reduced [NADPH--hemoprotein reductase] + O2 = (19S,20R)-epoxy-(4Z,7Z,10Z,13Z,16Z)-docosapentaenoate + oxidized [NADPH--hemoprotein reductase] + H2O + H(+). It catalyses the reaction (4Z,7Z,10Z,13Z,16Z,19Z)-docosahexaenoate + reduced [NADPH--hemoprotein reductase] + O2 = (19R,20S)-epoxy-(4Z,7Z,10Z,13Z,16Z)-docosapentaenoate + oxidized [NADPH--hemoprotein reductase] + H2O + H(+). The catalysed reaction is all-trans-retinol + reduced [NADPH--hemoprotein reductase] + O2 = all-trans-retinal + oxidized [NADPH--hemoprotein reductase] + 2 H2O + H(+). It carries out the reaction all-trans-retinal + reduced [NADPH--hemoprotein reductase] + O2 = all-trans-retinoate + oxidized [NADPH--hemoprotein reductase] + H2O + 2 H(+). The enzyme catalyses (13S)-hydroperoxy-(9Z,11E)-octadecadienoate = 13-oxo-(9Z,11E)-octadecadienoate + H2O. It catalyses the reaction (12S)-hydroperoxy-(5Z,8Z,10E,14Z)-eicosatetraenoate = 12-oxo-(5Z,8Z,10E,14Z)-eicosatetraenoate + H2O. The catalysed reaction is (15S)-hydroperoxy-(5Z,8Z,11Z,13E)-eicosatetraenoate = 15-oxo-(5Z,8Z,11Z,13E)-eicosatetraenoate + H2O. It carries out the reaction (5S)-hydroperoxy-(6E,8Z,11Z,14Z)-eicosatetraenoate = 5-oxo-(6E,8Z,11Z,14Z)-eicosatetraenoate + H2O. It participates in steroid hormone biosynthesis. Its pathway is lipid metabolism; fatty acid metabolism. The protein operates within cofactor metabolism; retinol metabolism. A cytochrome P450 monooxygenase involved in the metabolism of various endogenous substrates, including fatty acids, steroid hormones and vitamins. Mechanistically, uses molecular oxygen inserting one oxygen atom into a substrate, and reducing the second into a water molecule, with two electrons provided by NADPH via cytochrome P450 reductase (NADPH--hemoprotein reductase). Catalyzes the hydroxylation of carbon-hydrogen bonds. Exhibits high catalytic activity for the formation of hydroxyestrogens from estrone (E1) and 17beta-estradiol (E2), namely 2-hydroxy E1 and E2, as well as D-ring hydroxylated E1 and E2 at the C15-alpha and C16-alpha positions. Displays different regioselectivities for polyunsaturated fatty acids (PUFA) hydroxylation. Catalyzes the epoxidation of double bonds of certain PUFA. Converts arachidonic acid toward epoxyeicosatrienoic acid (EET) regioisomers, 8,9-, 11,12-, and 14,15-EET, that function as lipid mediators in the vascular system. Displays an absolute stereoselectivity in the epoxidation of eicosapentaenoic acid (EPA) producing the 17(R),18(S) enantiomer. May play an important role in all-trans retinoic acid biosynthesis in extrahepatic tissues. Catalyzes two successive oxidative transformation of all-trans retinol to all-trans retinal and then to the active form all-trans retinoic acid. May also participate in eicosanoids metabolism by converting hydroperoxide species into oxo metabolites (lipoxygenase-like reaction, NADPH-independent). This Homo sapiens (Human) protein is Cytochrome P450 1A1.